The primary structure comprises 950 residues: Protocadherin alpha-9 (950 aa).

An N-terminal signal peptide occupies residues 1–29 (MLYSSRGDPEGQPLLLSLLILAMWVVGSG). Cadherin domains lie at 30–133 (QLHY…PPVF), 134–242 (PATQ…APVF), 243–350 (DRTL…APQL), 351–455 (TIKT…APAF), 456–565 (AQSE…APAL), and 588–678 (GVVV…APKS). Residues 30 to 697 (QLHYSVPEEA…GPEVTLVDVN (668 aa)) lie on the Extracellular side of the membrane. Asparagine 254 and asparagine 265 each carry an N-linked (GlcNAc...) asparagine glycan. The N-linked (GlcNAc...) asparagine glycan is linked to asparagine 548. The chain crosses the membrane as a helical span at residues 698-718 (VYLIIAICAVSSLLVLTLLLY). The Cytoplasmic segment spans residues 719 to 950 (TVLRCSAMPT…GNSTTDNSDQ (232 aa)). A PXXP 1 repeat occupies 734-737 (PGKP). The 5 X 4 AA repeats of P-X-X-P stretch occupies residues 734–894 (PGKPTLVCSS…PDKFIIPGSP (161 aa)). 3 disordered regions span residues 770-808 (MAFS…DWRY), 827-856 (ILRA…EVSP), and 871-950 (YGPG…NSDQ). Over residues 789 to 798 (PSASSDSTGK) the composition is skewed to polar residues. PXXP repeat units lie at residues 799–802 (PRQP), 832–835 (PGGP), 873–876 (PGNP), and 891–894 (PGSP). The segment covering 909–923 (DKSDFITFGKKEETK) has biased composition (basic and acidic residues).

It localises to the cell membrane. In terms of biological role, potential calcium-dependent cell-adhesion protein. May be involved in the establishment and maintenance of specific neuronal connections in the brain. This chain is Protocadherin alpha-9 (PCDHA9), found in Homo sapiens (Human).